We begin with the raw amino-acid sequence, 256 residues long: Spore coat polysaccharide biosynthesis protein SpsA (256 aa).

An intrachain disulfide couples Cys-155 to Cys-243. The active site involves Asp-191.

Belongs to the glycosyltransferase 2 family. As to quaternary structure, monomer in solution.

The protein operates within spore coat biogenesis; spore coat polysaccharide biosynthesis. Its function is as follows. Glycosyltransferase implicated in the synthesis of the spore coat. The protein is Spore coat polysaccharide biosynthesis protein SpsA (spsA) of Bacillus subtilis (strain 168).